Reading from the N-terminus, the 156-residue chain is Small ribosomal subunit protein uS7 (156 aa).

The protein belongs to the universal ribosomal protein uS7 family. Part of the 30S ribosomal subunit. Contacts proteins S9 and S11.

Its function is as follows. One of the primary rRNA binding proteins, it binds directly to 16S rRNA where it nucleates assembly of the head domain of the 30S subunit. Is located at the subunit interface close to the decoding center, probably blocks exit of the E-site tRNA. This chain is Small ribosomal subunit protein uS7, found in Lactobacillus delbrueckii subsp. bulgaricus (strain ATCC 11842 / DSM 20081 / BCRC 10696 / JCM 1002 / NBRC 13953 / NCIMB 11778 / NCTC 12712 / WDCM 00102 / Lb 14).